The chain runs to 68 residues: Conotoxin Mr3.4 (68 aa).

Positions M1–A19 are cleaved as a signal peptide. Residues V20–R49 constitute a propeptide that is removed on maturation. 3 disulfides stabilise this stretch: C53/C67, C54/C63, and C59/C66. P65 carries the post-translational modification 4-hydroxyproline.

This sequence belongs to the conotoxin M superfamily. As to expression, expressed by the venom duct.

It localises to the secreted. The protein is Conotoxin Mr3.4 of Conus marmoreus (Marble cone).